Here is a 1092-residue protein sequence, read N- to C-terminus: MDVEDENETLRRFFEGHDINGALEPSNIDTSILEDYISKEDSSEICFPDIPSSVSYASPQPCGSSGVHLSSVLSNVGHTGSINSGGVHHLGQQMAVRPGPGPTCGGPPYPPHLNCNNNNAMLNPKGYPMCMSNQGLPIKAEPKTSYAAGTLPDSPPDSGSEAYSPQQLSDPHLLRTMTPENICHITPPSRLEHPPPPHLQGPLPPHSIHQQHYPSMQRELYMKVESMMPQYQNLGPAMPPADLHHAQQSQMLHQLLQQQHGAELPVHPSKKRKHSDSPTNTLREQISNGGMVKSEPGLIQDNDSLNGSYLDPNYQSIKWQPHLQNKWVSLYDASYKELPMLTYKVDADKGFNFSTGDDSFVCQKKNHFQVTVYIGMIGEPKYVKTPEGILPIECFFLKLNGVKLEAINQAISIEQSQSDRSKRPFHPVTLSLPPDQVTKVTVGRLHFSETTSNNMRKKGKPNPDQRYFLLVVALQVQAQNQTYLVAAQASERIIVRASNPGQFESDSEVLWQRGQLPDTVFHHGRIGINTERPDEALVVHGNVKIMGSLMHPSDIRAKESVEEVDTTEQLKRISQMRLVHYHYKPEFASTVGLDENAAETGVIAQEVQEILPEAVKESGDLVCANGETIENFLVVNKERIFMENVGAVKELCKLTDNLETRIDELERWSHKLAKLRRLDSMKSTNSHTGSSQFSRAGSVPYKQRPPKVMGKTVPGPAHQSCVSQRFLQATIIALVIIMAFSVISMTTLYVLNLRSEDDMLGIDGSLTPPGSCTLTFFRQIHLTLPYALCTGSSQNFDTTQLKGNTTPPPKITKSPDWQQDPPLTINLCMDPPCEVVCCPHILSSESPTITRKTSAASAETISQTDPAPSTIIRKAKSRNLDKNRNSLQTLPRPVSPLPPYTQGKNKHSPNSLPVRDVRKRRSLEEESTPITPMDRTQGNSNDSRYSLTSLRLLETDALITNRSCSSMDTCGSGNYTYKLPISKYSPLSGSLSLELNSSSPVSVNFCETSKGKGCQEPAAVTSPRDQSCPQGTDVCVTQVSPTSHLWSLQLLPSQDFTFHLRVSPPGASGCDDLSIDPSQVTDYYFRFYRLCD.

The Cytoplasmic segment spans residues 1 to 730; that stretch reads MDVEDENETL…CVSQRFLQAT (730 aa). Disordered regions lie at residues 145-168, 187-210, and 258-282; these read SYAAGTLPDSPPDSGSEAYSPQQL, PPSRLEHPPPPHLQGPLPPHSIHQ, and QQHGAELPVHPSKKRKHSDSPTNTL. The span at 196–205 shows a compositional bias: pro residues; the sequence is PPHLQGPLPP. The NDT80 DNA-binding region spans 246 to 507; it reads AQQSQMLHQL…SNPGQFESDS (262 aa). The Peptidase S74 domain maps to 553-662; that stretch reads SDIRAKESVE…KLTDNLETRI (110 aa). Residues 646 to 677 are a coiled coil; the sequence is GAVKELCKLTDNLETRIDELERWSHKLAKLRR. Positions 681–695 are enriched in polar residues; it reads MKSTNSHTGSSQFSR. Residues 681 to 714 are disordered; that stretch reads MKSTNSHTGSSQFSRAGSVPYKQRPPKVMGKTVP. A helical transmembrane segment spans residues 731 to 751; sequence IIALVIIMAFSVISMTTLYVL. Residues 752–1092 lie on the Lumenal side of the membrane; it reads NLRSEDDMLG…YYFRFYRLCD (341 aa). Disordered stretches follow at residues 798-817 and 849-945; these read TTQLKGNTTPPPKITKSPDW and ITRK…DSRY. Composition is skewed to polar residues over residues 849–867 and 928–945; these read ITRKTSAASAETISQTDPA and TPITPMDRTQGNSNDSRY. Asparagine 941, asparagine 961, asparagine 974, and asparagine 996 each carry an N-linked (GlcNAc...) asparagine glycan.

Belongs to the MRF family. In terms of assembly, homotrimer. In terms of processing, follows autocatalytic cleavage via the peptidase S74 domain. Autoprocessing is apparently constitutive and is essential for transcriptional activity.

Its subcellular location is the endoplasmic reticulum membrane. The protein resides in the nucleus. The protein localises to the cytoplasm. Constitutes a precursor of the transcription factor. Mediates the autocatalytic cleavage that releases the Myelin regulatory factor, N-terminal component that specifically activates transcription of central nervous system (CNS) myelin genes. Functionally, membrane-bound part that has no transcription factor activity and remains attached to the endoplasmic reticulum membrane following cleavage. Its function is as follows. Transcription factor that specifically activates expression of myelin genes during oligodendrocyte (OL) maturation, thereby playing a central role in oligodendrocyte maturation and CNS myelination. This is Myelin regulatory factor (myrf) from Xenopus laevis (African clawed frog).